The chain runs to 511 residues: DEP domain-containing protein 7 (511 aa).

One can recognise a DEP domain in the interval 46 to 136 (LQTQVEVKKR…SSCSLYRFTT (91 aa)).

Belongs to the DEPDC7 family. In terms of tissue distribution, expressed in liver.

In Homo sapiens (Human), this protein is DEP domain-containing protein 7 (DEPDC7).